Here is a 319-residue protein sequence, read N- to C-terminus: Acetyl esterase (319 aa).

Positions His91–Gly93 match the Involved in the stabilization of the negatively charged intermediate by the formation of the oxyanion hole motif. Residues Ser165, Asp262, and His292 contribute to the active site.

It belongs to the 'GDXG' lipolytic enzyme family. As to quaternary structure, homodimer. Interacts with MalT and MelA.

The protein localises to the cytoplasm. In terms of biological role, displays esterase activity towards short chain fatty esters (acyl chain length of up to 8 carbons). Able to hydrolyze triacetylglycerol (triacetin) and tributyrylglycerol (tributyrin), but not trioleylglycerol (triolein) or cholesterol oleate. Negatively regulates MalT activity by antagonizing maltotriose binding. Inhibits MelA galactosidase activity. In Escherichia coli O45:K1 (strain S88 / ExPEC), this protein is Acetyl esterase.